The primary structure comprises 120 residues: Large ribosomal subunit protein uL18 (120 aa).

This sequence belongs to the universal ribosomal protein uL18 family. As to quaternary structure, part of the 50S ribosomal subunit; part of the 5S rRNA/L5/L18/L25 subcomplex. Contacts the 5S and 23S rRNAs.

In terms of biological role, this is one of the proteins that bind and probably mediate the attachment of the 5S RNA into the large ribosomal subunit, where it forms part of the central protuberance. The polypeptide is Large ribosomal subunit protein uL18 (Chloroflexus aggregans (strain MD-66 / DSM 9485)).